Consider the following 696-residue polypeptide: Two-component response regulator ORR22 (696 aa).

A Response regulatory domain is found at 27–142 (RVLAVDDDPV…ELRNIWQHVV (116 aa)). Aspartate 78 is subject to 4-aspartylphosphate. The tract at residues 154 to 214 (LDFSKECNKP…DYQENDEPSA (61 aa)) is disordered. The segment covering 176 to 185 (TCGSSDQNGR) has biased composition (polar residues). Residues 195-211 (GEDDDEGDDNDYQENDE) show a composition bias toward acidic residues. The myb-like GARP DNA-binding region spans 214–273 (AAKKPRVVWSVELHRKFVAAVNQLGIDKAVPKRILELMNVEKLTRENVASHLQKYRLYLK).

The protein belongs to the ARR family. Type-B subfamily. Two-component system major event consists of a His-to-Asp phosphorelay between a sensor histidine kinase (HK) and a response regulator (RR). In plants, the His-to-Asp phosphorelay involves an additional intermediate named Histidine-containing phosphotransfer protein (HPt). This multistep phosphorelay consists of a His-Asp-His-Asp sequential transfer of a phosphate group between first a His and an Asp of the HK protein, followed by the transfer to a conserved His of the HPt protein and finally the transfer to an Asp in the receiver domain of the RR protein.

Its subcellular location is the nucleus. Its function is as follows. Transcriptional activator that binds specific DNA sequence. Functions as a response regulator involved in His-to-Asp phosphorelay signal transduction system. Phosphorylation of the Asp residue in the receiver domain activates the ability of the protein to promote the transcription of target genes. May directly activate some type-A response regulators in response to cytokinins. Functions as a response regulator in response to cytokinins. The chain is Two-component response regulator ORR22 from Oryza sativa subsp. japonica (Rice).